A 35-amino-acid chain; its full sequence is RCHFVICTTDCRRNSPGTYGECVKKEKGKECVCKS.

Cystine bridges form between C2–C22, C7–C31, and C11–C33.

It belongs to the short scorpion toxin superfamily. Potassium channel inhibitor family. In terms of tissue distribution, expressed by the venom gland.

Its subcellular location is the secreted. Its function is as follows. Blocks Kv1.6/KCNA6 potassium channels. In Hottentotta tamulus (Eastern Indian scorpion), this protein is Tamulustoxin-2.